A 293-amino-acid polypeptide reads, in one-letter code: ATP synthase gamma chain (293 aa).

It belongs to the ATPase gamma chain family. As to quaternary structure, F-type ATPases have 2 components, CF(1) - the catalytic core - and CF(0) - the membrane proton channel. CF(1) has five subunits: alpha(3), beta(3), gamma(1), delta(1), epsilon(1). CF(0) has three main subunits: a, b and c.

It is found in the cell inner membrane. Its function is as follows. Produces ATP from ADP in the presence of a proton gradient across the membrane. The gamma chain is believed to be important in regulating ATPase activity and the flow of protons through the CF(0) complex. This is ATP synthase gamma chain from Psychrobacter cryohalolentis (strain ATCC BAA-1226 / DSM 17306 / VKM B-2378 / K5).